A 362-amino-acid chain; its full sequence is 3-dehydroquinate synthase (362 aa).

NAD(+) contacts are provided by residues Gly95 to Asp99, Thr119 to Thr120, Lys132, and Lys141. Zn(2+) is bound by residues Glu174, His238, and His255.

The protein belongs to the sugar phosphate cyclases superfamily. Dehydroquinate synthase family. Co(2+) serves as cofactor. Zn(2+) is required as a cofactor. It depends on NAD(+) as a cofactor.

It is found in the cytoplasm. It catalyses the reaction 7-phospho-2-dehydro-3-deoxy-D-arabino-heptonate = 3-dehydroquinate + phosphate. Its pathway is metabolic intermediate biosynthesis; chorismate biosynthesis; chorismate from D-erythrose 4-phosphate and phosphoenolpyruvate: step 2/7. Catalyzes the conversion of 3-deoxy-D-arabino-heptulosonate 7-phosphate (DAHP) to dehydroquinate (DHQ). This chain is 3-dehydroquinate synthase, found in Chlorobium luteolum (strain DSM 273 / BCRC 81028 / 2530) (Pelodictyon luteolum).